The sequence spans 415 residues: Protein fuzzy homolog (415 aa).

This sequence belongs to the fuzzy family. As to quaternary structure, component of the CPLANE (ciliogenesis and planar polarity effectors) complex, composed of INTU, FUZ and WDPCP. Interacts with CPLANE1 and CPLANE2.

The protein resides in the cytoplasm. The protein localises to the cytoskeleton. Its subcellular location is the cilium basal body. Its function is as follows. Probable planar cell polarity effector involved in cilium biogenesis. Proposed to function as core component of the CPLANE (ciliogenesis and planar polarity effectors) complex involved in the recruitment of peripheral IFT-A proteins to basal bodies. May regulate protein and membrane transport to the cilium. May regulate the morphogenesis of hair follicles which depends on functional primary cilia. Binds phosphatidylinositol 3-phosphate with highest affinity, followed by phosphatidylinositol 4-phosphate and phosphatidylinositol 5-phosphate. This Rattus norvegicus (Rat) protein is Protein fuzzy homolog (Fuz).